Here is a 430-residue protein sequence, read N- to C-terminus: Asparagine--tRNA ligase (430 aa).

It belongs to the class-II aminoacyl-tRNA synthetase family. As to quaternary structure, homodimer.

The protein resides in the cytoplasm. The enzyme catalyses tRNA(Asn) + L-asparagine + ATP = L-asparaginyl-tRNA(Asn) + AMP + diphosphate + H(+). In Pelotomaculum thermopropionicum (strain DSM 13744 / JCM 10971 / SI), this protein is Asparagine--tRNA ligase.